The following is a 251-amino-acid chain: Derlin-1 (251 aa).

Ser-2 is modified (N-acetylserine). Over 2–15 (SDIGDWFRSIPAIT) the chain is Cytoplasmic. The chain crosses the membrane as a helical span at residues 16-31 (RYWFAATVAVPLIGKL). Over 32 to 69 (GIISPAYFFLWPEAFLYRFQIWRPFTATFYFPVGPGTG) the chain is Lumenal. A helical membrane pass occupies residues 70-89 (FLYLVNLYFLYQYSTRLEAG). Residues 90–94 (AFDGR) are Cytoplasmic-facing. Residues 95-115 (PADYLFMLLFNWICIVITGLA) form a helical membrane-spanning segment. The Lumenal portion of the chain corresponds to 116 to 122 (MDMQLLM). A helical transmembrane segment spans residues 123-137 (IPLIMSVLYVWAQLN). Over 138 to 154 (RDLIVSFWFGTRFKACY) the chain is Cytoplasmic. Residues 155–166 (LPWVILGFNYII) traverse the membrane as a helical segment. Residues 167 to 170 (GGSV) are Lumenal-facing. The chain crosses the membrane as a helical span at residues 171 to 189 (INELIGNLVGHLYFFLMFR). The Cytoplasmic segment spans residues 190-251 (YPMDLGGRNF…WGQGFRLGDQ (62 aa)). Position 201 is a phosphoserine (Ser-201). Thr-202 is subject to Phosphothreonine. Ser-226 carries the phosphoserine modification. The segment at 229–251 (RAADQNGGGGRHNWGQGFRLGDQ) is disordered. An SHP-box motif is present at residues 241 to 248 (NWGQGFRL).

Belongs to the derlin family. In terms of assembly, homotetramer. The four subunits of the tetramer are arranged in a twofold symmetry. Forms homo- and heterooligomers with DERL2 and DERL3; binding to DERL3 is poorer than that between DERL2 and DERL3. Interacts (via SHP-box motif) with VCP. Interacts with AMFR, SELENOS, SEL1L, SELENOK and SYVN1, as well as with SEL1L-SYVN1 and VCP-SELENOS protein complexes; this interaction is weaker than that observed between DERL2 and these complexes. Interacts with NGLY1 and YOD1. Does not bind to EDEM1. Interacts with DNAJB9. Interacts with RNF103. Interacts with HM13. Interacts with XBP1 isoform 1 (via luminal/ectodomain domain); the interaction obviates the need for ectodomain shedding prior HM13/SPP-mediated XBP1 isoform 1 cleavage. Interacts with the signal recognition particle/SRP and the SRP receptor; in the process of endoplasmic reticulum stress-induced pre-emptive quality control. May interact with UBXN6. Interacts with ZFAND2B; probably through VCP. Interacts with CCDC47. Interacts with C18orf32. May interact with TRAM1. Forms a complex with SVIP and VCP/p97. Widely expressed, with lowest levels in brain and heart.

Its subcellular location is the endoplasmic reticulum membrane. Its function is as follows. Functional component of endoplasmic reticulum-associated degradation (ERAD) for misfolded lumenal proteins. Forms homotetramers which encircle a large channel traversing the endoplasmic reticulum (ER) membrane. This allows the retrotranslocation of misfolded proteins from the ER into the cytosol where they are ubiquitinated and degraded by the proteasome. The channel has a lateral gate within the membrane which provides direct access to membrane proteins with no need to reenter the ER lumen first. May mediate the interaction between VCP and the misfolded protein. Also involved in endoplasmic reticulum stress-induced pre-emptive quality control, a mechanism that selectively attenuates the translocation of newly synthesized proteins into the endoplasmic reticulum and reroutes them to the cytosol for proteasomal degradation. By controlling the steady-state expression of the IGF1R receptor, indirectly regulates the insulin-like growth factor receptor signaling pathway. This is Derlin-1 from Mus musculus (Mouse).